The following is a 196-amino-acid chain: Ras-related protein RabC (196 aa).

13 to 20 (GESGVGKS) contributes to the GTP binding site. An Effector region motif is present at residues 35–43 (FAPTLGVDF). GTP contacts are provided by residues 63-67 (DTAGQ) and 121-124 (NKSD). Residues C195 and C196 are each lipidated (S-geranylgeranyl cysteine).

The protein belongs to the small GTPase superfamily. Rab family.

It is found in the cell membrane. This is Ras-related protein RabC (rabC) from Dictyostelium discoideum (Social amoeba).